The following is a 309-amino-acid chain: Probable 2,4-dienoyl-CoA reductase 3 [(3E)-enoyl-CoA-producing] (309 aa).

Residues 32-37, Arg57, and Asp83 each bind NADP(+); that span reads GGGTGI. Residue Arg57 coordinates substrate. The substrate site is built by Phe116 and Ser124. The Proton acceptor role is filled by Tyr166. Residues Lys181 and 207–210 contribute to the NADP(+) site; that span reads PGPI. Residue Arg218 participates in substrate binding.

Belongs to the short-chain dehydrogenases/reductases (SDR) family. 2,4-dienoyl-CoA reductase subfamily.

The enzyme catalyses a (2E,4E)-dienoyl-CoA + NADPH + H(+) = a 4,5-saturated-(3E)-enoyl-CoA + NADP(+). It carries out the reaction a (2E,4Z)-dienoyl-CoA + NADPH + H(+) = a 4,5-saturated-(3E)-enoyl-CoA + NADP(+). Functionally, auxiliary enzyme of beta-oxidation. It participates in the metabolism of unsaturated fatty enoyl-CoA esters having double bonds in both even- and odd-numbered positions. Catalyzes the NADP-dependent reduction of 2,4-dienoyl-CoA to yield trans-3-enoyl-CoA. The protein is Probable 2,4-dienoyl-CoA reductase 3 [(3E)-enoyl-CoA-producing] of Caenorhabditis elegans.